We begin with the raw amino-acid sequence, 361 residues long: Phosphoserine aminotransferase (361 aa).

L-glutamate is bound at residue Arg42. Residues Ala76–Arg77, Trp102, Thr153, Asp173, and Gln196 each bind pyridoxal 5'-phosphate. Lys197 carries the post-translational modification N6-(pyridoxal phosphate)lysine. Asn238–Thr239 contributes to the pyridoxal 5'-phosphate binding site.

This sequence belongs to the class-V pyridoxal-phosphate-dependent aminotransferase family. SerC subfamily. In terms of assembly, homodimer. Pyridoxal 5'-phosphate serves as cofactor.

It localises to the cytoplasm. The catalysed reaction is O-phospho-L-serine + 2-oxoglutarate = 3-phosphooxypyruvate + L-glutamate. The enzyme catalyses 4-(phosphooxy)-L-threonine + 2-oxoglutarate = (R)-3-hydroxy-2-oxo-4-phosphooxybutanoate + L-glutamate. The protein operates within amino-acid biosynthesis; L-serine biosynthesis; L-serine from 3-phospho-D-glycerate: step 2/3. It participates in cofactor biosynthesis; pyridoxine 5'-phosphate biosynthesis; pyridoxine 5'-phosphate from D-erythrose 4-phosphate: step 3/5. Catalyzes the reversible conversion of 3-phosphohydroxypyruvate to phosphoserine and of 3-hydroxy-2-oxo-4-phosphonooxybutanoate to phosphohydroxythreonine. The sequence is that of Phosphoserine aminotransferase from Yersinia pseudotuberculosis serotype IB (strain PB1/+).